A 227-amino-acid chain; its full sequence is Cytochrome c oxidase subunit 2 (227 aa).

The Mitochondrial intermembrane portion of the chain corresponds to 1-14 (MAYPFQLGLQDATS). A helical transmembrane segment spans residues 15-45 (PIMEELLHFHDHTLMIVFLISSLVLYIITLM). At 46-59 (LTTKLTHTSTMDAQ) the chain is on the mitochondrial matrix side. The helical transmembrane segment at 60–87 (EVETVWTILPAIILILIALPSLRILYMM) threads the bilayer. The Mitochondrial intermembrane segment spans residues 88-227 (DEINNPSLTV…YFETWSALMV (140 aa)). 6 residues coordinate Cu cation: histidine 161, cysteine 196, glutamate 198, cysteine 200, histidine 204, and methionine 207. Mg(2+) is bound at residue glutamate 198. Tyrosine 218 carries the post-translational modification Phosphotyrosine.

It belongs to the cytochrome c oxidase subunit 2 family. As to quaternary structure, component of the cytochrome c oxidase (complex IV, CIV), a multisubunit enzyme composed of 14 subunits. The complex is composed of a catalytic core of 3 subunits MT-CO1, MT-CO2 and MT-CO3, encoded in the mitochondrial DNA, and 11 supernumerary subunits COX4I, COX5A, COX5B, COX6A, COX6B, COX6C, COX7A, COX7B, COX7C, COX8 and NDUFA4, which are encoded in the nuclear genome. The complex exists as a monomer or a dimer and forms supercomplexes (SCs) in the inner mitochondrial membrane with NADH-ubiquinone oxidoreductase (complex I, CI) and ubiquinol-cytochrome c oxidoreductase (cytochrome b-c1 complex, complex III, CIII), resulting in different assemblies (supercomplex SCI(1)III(2)IV(1) and megacomplex MCI(2)III(2)IV(2)). Found in a complex with TMEM177, COA6, COX18, COX20, SCO1 and SCO2. Interacts with TMEM177 in a COX20-dependent manner. Interacts with COX20. Interacts with COX16. Cu cation is required as a cofactor.

The protein localises to the mitochondrion inner membrane. It carries out the reaction 4 Fe(II)-[cytochrome c] + O2 + 8 H(+)(in) = 4 Fe(III)-[cytochrome c] + 2 H2O + 4 H(+)(out). Its function is as follows. Component of the cytochrome c oxidase, the last enzyme in the mitochondrial electron transport chain which drives oxidative phosphorylation. The respiratory chain contains 3 multisubunit complexes succinate dehydrogenase (complex II, CII), ubiquinol-cytochrome c oxidoreductase (cytochrome b-c1 complex, complex III, CIII) and cytochrome c oxidase (complex IV, CIV), that cooperate to transfer electrons derived from NADH and succinate to molecular oxygen, creating an electrochemical gradient over the inner membrane that drives transmembrane transport and the ATP synthase. Cytochrome c oxidase is the component of the respiratory chain that catalyzes the reduction of oxygen to water. Electrons originating from reduced cytochrome c in the intermembrane space (IMS) are transferred via the dinuclear copper A center (CU(A)) of subunit 2 and heme A of subunit 1 to the active site in subunit 1, a binuclear center (BNC) formed by heme A3 and copper B (CU(B)). The BNC reduces molecular oxygen to 2 water molecules using 4 electrons from cytochrome c in the IMS and 4 protons from the mitochondrial matrix. The polypeptide is Cytochrome c oxidase subunit 2 (MT-CO2) (Vulpes macrotis (Kit fox)).